A 1755-amino-acid polypeptide reads, in one-letter code: MASEMEPEVQAIDRSLLECSAEEIAGRWLQATDLNREVYQHLAHCVPKIYCRGPNPFPQKEDTLAQHILLGPMEWYICAEDPALGFPKLEQANKPSHLCGRVFKVGEPTYSCRDCAVDPTCVLCMECFLGSIHRDHRYRMTTSGGGGFCDCGDTEAWKEGPYCQKHKLSSSEVVEEEDPLVHLSEDVIARTYNIFAIMFRYAVDILTWEKESELPEDLEVAEKSDTYYCMLFNDEVHTYEQVIYTLQKAVNCTQKEAIGFATTVDRDGRRSVRYGDFQYCDQAKTVIVRNTSRQTKPLKVQVMHSSVAAHQNFGLKALSWLGSVIGYSDGLRRILCQVGLQEGPDGENSSLVDRLMLNDSKLWKGARSVYHQLFMSSLLMDLKYKKLFALRFAKNYRQLQRDFMEDDHERAVSVTALSVQFFTAPTLARMLLTEENLMTVIIKAFMDHLKHRDAQGRFQFERYTALQAFKFRRVQSLILDLKYVLISKPTEWSDELRQKFLQGFDAFLELLKCMQGMDPITRQVGQHIEMEPEWEAAFTLQMKLTHVISMVQDWCALDEKVLIEAYKKCLAVLTQCHGGFTDGEQPITLSICGHSVETIRYCVSQEKVSIHLPISRLLAGLHVLLSKSEVAYKFPELLPLSELSPPMLIEHPLRCLVLCAQVHAGMWRRNGFSLVNQIYYYHNVKCRREMFDKDIVMLQTGVSMMDPNHFLMIMLSRFELYQLFSTPDYGKRFSSEVTHKDVVQQNNTLIEEMLYLIIMLVGERFNPGVGQVAATDEIKREIIHQLSIKPMAHSELVKSLPEDENKETGMESVIESVAHFKKPGLTGRGMYELKPECAKEFNLYFYHFSRAEQSKAEEAQRKLKRENKEDTALPPPALPPFCPLFASLVNILQCDVMLYIMGTILQWAVEHHGSAWSESMLQRVLHLIGMALQEEKHHLENAVEGHVQTFTFTQKISKPGDAPHNSPSILAMLETLQNAPSLEAHKDMIRWLLKMFNAIKKIRECSSSSPVAEAEGTIMEESSRDKDKAERKRKAEIARLRREKIMAQMSEMQRHFIDENKELFQQTLELDTSASATLDSSPPVSDAALTALGPAQTQVPEPRQFVTCILCQEEQEVTVGSRAMVLAAFVQRSTVLSKDRTKTIADPEKYDPLFMHPDLSCGTHTGSCGHVMHAHCWQRYFDSVQAKEQRRQQRLRLHTSYDVENGEFLCPLCECLSNTVIPLLLPPRSILSRRLNFSDQPDLAQWTRAVTQQIKVVQMLRRKHNAADTSSSEDTEAMNIIPIPEGFRPDFYPRNPYSDSIKEMLTTFGTAAYKVGLKVHPNEGDPRVPILCWGTCAYTIQSIERILSDEEKPVFGPLPCRLDDCLRSLTRFAAAHWTVALLPVVQGHFCKLFASLVPSDSYEDLPCILDIDMFHLLVGLVLAFPALQCQDFSGSSLATGDLHIFHLVTMAHIVQILLTSCTEENGMDQENPTGEEELAILSLHKTLHQYTGSALKEAPSGWHLWRSVRAAIMPFLKCSALFFHYLNGVPAPPDLQVSGTSHFEHLCNYLSLPTNLIHLFQENSDIMNSLIESWCQNSEVKRYLNGERGAISYPRGANKLIDLPEDYSSLINQASNFSCPKSGGDKSRAPTLCLVCGSLLCSQSYCCQAELEGEDVGACTAHTYSCGSGAGIFLRVRECQVLFLAGKTKGCFYSPPYLDDYGETDQGLRRGNPLHLCQERFRKIQKLWQQHSITEEIGHAQEANQTLVGIDWQHL.

Alanine 2 is modified (N-acetylalanine). Residue lysine 94 forms a Glycyl lysine isopeptide (Lys-Gly) (interchain with G-Cter in ubiquitin) linkage. The UBR-type zinc-finger motif lies at 97 to 168; it reads HLCGRVFKVG…EGPYCQKHKL (72 aa). 7 residues coordinate Zn(2+): cysteine 99, cysteine 112, cysteine 115, cysteine 124, cysteine 127, histidine 133, and histidine 136. Phenylalanine 148 lines the a peptide pocket. Cysteine 149 is a Zn(2+) binding site. Aspartate 150 contributes to the a peptide binding site. Cysteine 151 lines the Zn(2+) pocket. Residue aspartate 153 coordinates a peptide. Residue lysine 158 forms a Glycyl lysine isopeptide (Lys-Gly) (interchain with G-Cter in ubiquitin) linkage. Cysteine 163 serves as a coordination point for Zn(2+). Lysine 165 participates in a covalent cross-link: Glycyl lysine isopeptide (Lys-Gly) (interchain with G-Cter in ubiquitin). A Zn(2+)-binding site is contributed by histidine 166. Residues lysine 248, lysine 255, and lysine 470 each participate in a glycyl lysine isopeptide (Lys-Gly) (interchain with G-Cter in ubiquitin) cross-link. Phosphoserine is present on serine 476. Glycyl lysine isopeptide (Lys-Gly) (interchain with G-Cter in ubiquitin) cross-links involve residues lysine 488, lysine 568, lysine 779, and lysine 789. The segment at 1012–1033 is disordered; the sequence is AEAEGTIMEESSRDKDKAERKR. Residues 1019-1054 are a coiled coil; that stretch reads MEESSRDKDKAERKRKAEIARLRREKIMAQMSEMQR. Positions 1021–1033 are enriched in basic and acidic residues; it reads ESSRDKDKAERKR. The Zn(2+) site is built by cysteine 1108, cysteine 1111, cysteine 1168, histidine 1170, histidine 1173, cysteine 1176, cysteine 1210, and cysteine 1213. Residues 1108 to 1214 form an RING-type; atypical zinc finger; sequence CILCQEEQEV…NGEFLCPLCE (107 aa). Glycyl lysine isopeptide (Lys-Gly) (interchain with G-Cter in ubiquitin) cross-links involve residues lysine 1496, lysine 1599, and lysine 1689. Serine 1694 carries the post-translational modification Phosphoserine. Tyrosine 1697 is modified (phosphotyrosine).

It belongs to the E3 ubiquitin-protein ligase UBR1-like family. As to quaternary structure, interacts with UBE2B; promotes the UBE2B-H2A interaction and the ubiquitination of histone H2A by UBE2B and UBR2. Interacts with RECQL4. Interacts with Tex19.1 and Tex19.2; does not lead to Tex19.1 degradation and stabilizes it. Interacts with L1RE1. Interacts with CASP8. Interacts with ATXN3. Interacts with UBE2O. Post-translationally, dephosphorylated by DUSP22 at Ser-1694 and Tyr-1697, leading to subsequent ubiquitination and proteasomal degradation. 'Lys-48'-linked ubiquitinated at Lys-94, Lys-779 and Lys-1599 following DUSP22-mediated dephosphorylation of Ser-1694 and Tyr-1697 which promotes UBR2 interaction with the SCF(FBW1A) E3 ubiquitin-protein ligase complex. In terms of tissue distribution, highly expressed in skeletal muscle. Also expressed in heart, kidney and testis. Expressed in acinar cells of the pancreas. In testes, expressed primarily in spermatocytes. Expressed in cerebellum.

The protein resides in the nucleus. It localises to the chromosome. The enzyme catalyses S-ubiquitinyl-[E2 ubiquitin-conjugating enzyme]-L-cysteine + [acceptor protein]-L-lysine = [E2 ubiquitin-conjugating enzyme]-L-cysteine + N(6)-ubiquitinyl-[acceptor protein]-L-lysine.. It participates in protein modification; protein ubiquitination. In terms of biological role, E3 ubiquitin-protein ligase which is a component of the N-end rule pathway. Recognizes and binds to proteins bearing specific N-terminal residues (N-degrons) that are destabilizing according to the N-end rule, leading to their ubiquitination and subsequent degradation. Recognizes both type-1 and type-2 N-degrons, containing positively charged amino acids (Arg, Lys and His) and bulky and hydrophobic amino acids, respectively. Does not ubiquitinate proteins that are acetylated at the N-terminus. In contrast, it strongly binds methylated N-degrons. Plays a critical role in chromatin inactivation and chromosome-wide transcriptional silencing during meiosis via ubiquitination of histone H2A. Binds leucine and is a negative regulator of the leucine-mTOR signaling pathway, thereby controlling cell growth. Required for spermatogenesis, promotes, with Tex19.1, SPO11-dependent recombination foci to accumulate and drive robust homologous chromosome synapsis. Polyubiquitinates LINE-1 retrotransposon encoded, LIRE1, which induces degradation, inhibiting LINE-1 retrotransposon mobilization. Catalyzes ubiquitination and degradation of the N-terminal part of NLRP1B following NLRP1B activation by pathogens and other damage-associated signals: ubiquitination promotes degradation of the N-terminal part and subsequent release of the cleaved C-terminal part of NLRP1B, which polymerizes and forms the NLRP1B inflammasome followed by host cell pyroptosis. Plays a role in T-cell receptor signaling by inducing 'Lys-63'-linked ubiquitination of lymphocyte cell-specific kinase LCK. This activity is regulated by DUSP22, which induces 'Lys-48'-linked ubiquitination of UBR2, leading to its proteasomal degradation by SCF E3 ubiquitin-protein ligase complex. The protein is E3 ubiquitin-protein ligase UBR2 of Mus musculus (Mouse).